Here is a 349-residue protein sequence, read N- to C-terminus: Ferredoxin--NADP reductase 1 (349 aa).

Positions 36, 44, 48, 88, 123, 290, and 331 each coordinate FAD.

This sequence belongs to the ferredoxin--NADP reductase type 2 family. In terms of assembly, homodimer. FAD is required as a cofactor.

The enzyme catalyses 2 reduced [2Fe-2S]-[ferredoxin] + NADP(+) + H(+) = 2 oxidized [2Fe-2S]-[ferredoxin] + NADPH. The sequence is that of Ferredoxin--NADP reductase 1 from Lysinibacillus sphaericus (strain C3-41).